The primary structure comprises 325 residues: Acetyl-coenzyme A carboxylase carboxyl transferase subunit beta (325 aa).

The CoA carboxyltransferase N-terminal domain occupies 24 to 293; the sequence is LWIKCPDSGH…AEIEVVTPEP (270 aa).

It belongs to the AccD/PCCB family. As to quaternary structure, acetyl-CoA carboxylase is a heterohexamer composed of biotin carboxyl carrier protein (AccB), biotin carboxylase (AccC) and two subunits each of ACCase subunit alpha (AccA) and ACCase subunit beta (AccD).

The protein localises to the cytoplasm. It carries out the reaction N(6)-carboxybiotinyl-L-lysyl-[protein] + acetyl-CoA = N(6)-biotinyl-L-lysyl-[protein] + malonyl-CoA. It participates in lipid metabolism; malonyl-CoA biosynthesis; malonyl-CoA from acetyl-CoA: step 1/1. Its function is as follows. Component of the acetyl coenzyme A carboxylase (ACC) complex. Biotin carboxylase (BC) catalyzes the carboxylation of biotin on its carrier protein (BCCP) and then the CO(2) group is transferred by the transcarboxylase to acetyl-CoA to form malonyl-CoA. The sequence is that of Acetyl-coenzyme A carboxylase carboxyl transferase subunit beta from Rhodopseudomonas palustris (strain BisA53).